Consider the following 145-residue polypeptide: 3-hydroxyacyl-[acyl-carrier-protein] dehydratase FabZ (145 aa).

The active site involves His-48.

This sequence belongs to the thioester dehydratase family. FabZ subfamily.

It localises to the cytoplasm. The enzyme catalyses a (3R)-hydroxyacyl-[ACP] = a (2E)-enoyl-[ACP] + H2O. Functionally, involved in unsaturated fatty acids biosynthesis. Catalyzes the dehydration of short chain beta-hydroxyacyl-ACPs and long chain saturated and unsaturated beta-hydroxyacyl-ACPs. This Campylobacter hominis (strain ATCC BAA-381 / DSM 21671 / CCUG 45161 / LMG 19568 / NCTC 13146 / CH001A) protein is 3-hydroxyacyl-[acyl-carrier-protein] dehydratase FabZ.